Consider the following 188-residue polypeptide: UPF0488 protein C8orf33 homolog (188 aa).

Disordered regions lie at residues 1–65, 87–112, and 144–182; these read MAAP…AEAQ, QRPT…TPLP, and AHSA…RDEE. A2 carries the post-translational modification N-acetylalanine. The residue at position 41 (S41) is a Phosphoserine. Residues 166–182 show a composition bias toward basic and acidic residues; sequence PRPEGRSKGTSDTRDEE.

This sequence belongs to the UPF0488 family.

This chain is UPF0488 protein C8orf33 homolog, found in Bos taurus (Bovine).